Reading from the N-terminus, the 123-residue chain is Small ribosomal subunit protein bS16 (123 aa).

The disordered stretch occupies residues 79 to 123; sequence AGIAKRPSRNNPTKGEPGKKAQERLALAKQAEEEAAAKAAEAASE.

The protein belongs to the bacterial ribosomal protein bS16 family.

This is Small ribosomal subunit protein bS16 from Brucella melitensis biotype 2 (strain ATCC 23457).